The following is an 87-amino-acid chain: Gibberellin-regulated protein 8 (87 aa).

The first 25 residues, 1–25, serve as a signal peptide directing secretion; sequence MKLVVVQFFIISLLLTSSFSVLSSA.

It belongs to the GASA family. Six disulfide bonds may be present. As to expression, expressed in roots and developing seeds.

The protein resides in the secreted. Gibberellin-regulated protein that may function in hormonal controlled steps of development such as seed germination, flowering and seed maturation. This chain is Gibberellin-regulated protein 8, found in Arabidopsis thaliana (Mouse-ear cress).